A 360-amino-acid chain; its full sequence is Mannonate dehydratase (360 aa).

This sequence belongs to the mannonate dehydratase family. Fe(2+) serves as cofactor. The cofactor is Mn(2+).

The enzyme catalyses D-mannonate = 2-dehydro-3-deoxy-D-gluconate + H2O. It participates in carbohydrate metabolism; pentose and glucuronate interconversion. Its function is as follows. Catalyzes the dehydration of D-mannonate. The protein is Mannonate dehydratase (uxuA) of Thermotoga neapolitana.